We begin with the raw amino-acid sequence, 314 residues long: DNA-directed RNA polymerase subunit alpha (314 aa).

An alpha N-terminal domain (alpha-NTD) region spans residues 1 to 228 (MIEIEKPRIE…EHLNIFVGLT (228 aa)). The alpha C-terminal domain (alpha-CTD) stretch occupies residues 245–314 (KEKVLEMSIE…DLGLGLRKED (70 aa)).

The protein belongs to the RNA polymerase alpha chain family. As to quaternary structure, homodimer. The RNAP catalytic core consists of 2 alpha, 1 beta, 1 beta' and 1 omega subunit. When a sigma factor is associated with the core the holoenzyme is formed, which can initiate transcription.

The enzyme catalyses RNA(n) + a ribonucleoside 5'-triphosphate = RNA(n+1) + diphosphate. DNA-dependent RNA polymerase catalyzes the transcription of DNA into RNA using the four ribonucleoside triphosphates as substrates. The protein is DNA-directed RNA polymerase subunit alpha of Staphylococcus saprophyticus subsp. saprophyticus (strain ATCC 15305 / DSM 20229 / NCIMB 8711 / NCTC 7292 / S-41).